Consider the following 93-residue polypeptide: Large ribosomal subunit protein uL23cz/uL23cy (93 aa).

The protein belongs to the universal ribosomal protein uL23 family. Part of the 50S ribosomal subunit.

It localises to the plastid. The protein localises to the chloroplast. Binds to 23S rRNA. This chain is Large ribosomal subunit protein uL23cz/uL23cy (rpl23-A), found in Helianthus annuus (Common sunflower).